The following is a 365-amino-acid chain: D-alanine--D-alanine ligase (365 aa).

An ATP-grasp domain is found at 140–346 (KKILRRHGLQ…YSQLLTDLIY (207 aa)). 173-228 (EKQLSYPIFVKPANLGSSVGISKVKNREELIQGIDLAVKYDMKCLAEEFIPGKEIE) lines the ATP pocket. Positions 299, 313, and 315 each coordinate Mg(2+).

It belongs to the D-alanine--D-alanine ligase family. It depends on Mg(2+) as a cofactor. The cofactor is Mn(2+).

It localises to the cytoplasm. The enzyme catalyses 2 D-alanine + ATP = D-alanyl-D-alanine + ADP + phosphate + H(+). The protein operates within cell wall biogenesis; peptidoglycan biosynthesis. In terms of biological role, cell wall formation. This chain is D-alanine--D-alanine ligase, found in Natranaerobius thermophilus (strain ATCC BAA-1301 / DSM 18059 / JW/NM-WN-LF).